We begin with the raw amino-acid sequence, 159 residues long: 3-hydroxyacyl-[acyl-carrier-protein] dehydratase FabZ (159 aa).

His-65 is a catalytic residue.

The protein belongs to the thioester dehydratase family. FabZ subfamily.

Its subcellular location is the cytoplasm. It carries out the reaction a (3R)-hydroxyacyl-[ACP] = a (2E)-enoyl-[ACP] + H2O. In terms of biological role, involved in unsaturated fatty acids biosynthesis. Catalyzes the dehydration of short chain beta-hydroxyacyl-ACPs and long chain saturated and unsaturated beta-hydroxyacyl-ACPs. This Microcystis aeruginosa (strain NIES-843 / IAM M-2473) protein is 3-hydroxyacyl-[acyl-carrier-protein] dehydratase FabZ.